The following is a 257-amino-acid chain: uncharacterized protein (257 aa).

To yeast YKR015c.

This is an uncharacterized protein from Saccharomyces cerevisiae (strain ATCC 204508 / S288c) (Baker's yeast).